We begin with the raw amino-acid sequence, 441 residues long: Collagen alpha-1(XXVI) chain (441 aa).

Residues 1-20 (MKLALLLPWACCCLCGSALA) form the signal peptide. An EMI domain is found at 52-128 (RRHWCHHTVT…PGFTGSNCDE (77 aa)). 3 cysteine pairs are disulfide-bonded: Cys-56–Cys-118, Cys-83–Cys-89, and Cys-117–Cys-126. Asn-70 carries an N-linked (GlcNAc...) asparagine glycan. Residue Asn-132 is glycosylated (N-linked (GlcNAc...) asparagine). Disordered regions lie at residues 156-362 (AERP…AEGE) and 390-441 (PLAS…SSRK). Collagen-like domains are found at residues 199–267 (GPAG…PGPS) and 302–355 (GVPG…EGEK). 4 stretches are compositionally biased toward pro residues: residues 200 to 215 (PAGP…PAGP), 231 to 243 (AGPP…PGPR), 252 to 269 (PGPP…PSPN), and 306 to 327 (PRGP…PPGT). The span at 348–357 (VKGEEGEKAA) shows a compositional bias: basic and acidic residues.

As to quaternary structure, homotrimer or heterotrimer. Post-translationally, hydroxylated on proline residues.

It localises to the secreted. The protein resides in the extracellular space. It is found in the extracellular matrix. In Homo sapiens (Human), this protein is Collagen alpha-1(XXVI) chain (COL26A1).